Here is a 520-residue protein sequence, read N- to C-terminus: Nonsense-mediated mRNA decay factor SMG9 (520 aa).

Disordered stretches follow at residues 1-94 and 107-143; these read MSES…PAPL and GKGPVAATGASTPEGTAPPPPTAPAPPKGEKEGQRPT. Ser2 bears the N-acetylserine mark. 5 positions are modified to phosphoserine: Ser2, Ser4, Ser7, Ser32, and Ser53. Basic and acidic residues predominate over residues 36–53; it reads GRERDYIAPWERERRDGS. Over residues 78 to 94 the composition is skewed to pro residues; it reads QPPPSTAPAAPPAPAPL. Low complexity predominate over residues 112 to 121; the sequence is AATGASTPEG. Over residues 122-133 the composition is skewed to pro residues; the sequence is TAPPPPTAPAPP. At Ser451 the chain carries Phosphoserine.

Belongs to the SMG9 family. In terms of assembly, self-associates to form homodimers and forms heterodimers with SMG8; these assembly forms may represent SMG1C intermediate forms. Component of the SMG1C complex composed of SMG1, SMG8 and SMG9. Interacts with DHX34; the interaction is RNA-independent. In terms of processing, phosphorylated by SMG1.

Functionally, involved in nonsense-mediated decay (NMD) of mRNAs containing premature stop codons. Is recruited by release factors to stalled ribosomes together with SMG1 and SMG8 (forming the SMG1C protein kinase complex) and, in the SMG1C complex, is required for the efficient association between SMG1 and SMG8. Plays a role in brain, heart, and eye development. In Rattus norvegicus (Rat), this protein is Nonsense-mediated mRNA decay factor SMG9.